The primary structure comprises 596 residues: Putative ankyrin repeat protein FPV024 (596 aa).

ANK repeat units follow at residues Lys-5 to Asn-34, Ala-37 to Lys-66, Lys-68 to Lys-96, Leu-99 to Thr-128, Phe-130 to Ile-158, His-162 to Ile-191, Tyr-195 to Glu-225, Leu-229 to Ile-258, Cys-262 to Ile-291, Thr-295 to Leu-324, Ser-326 to Ile-355, Glu-359 to Met-389, and Asn-394 to Ser-423.

The chain is Putative ankyrin repeat protein FPV024 from Fowlpox virus (strain NVSL) (FPV).